The primary structure comprises 471 residues: ATP synthase subunit beta (471 aa).

ATP is bound at residue 158 to 165 (GGAGCGKT).

This sequence belongs to the ATPase alpha/beta chains family. In terms of assembly, F-type ATPases have 2 components, CF(1) - the catalytic core - and CF(0) - the membrane proton channel. CF(1) has five subunits: alpha(3), beta(3), gamma(1), delta(1), epsilon(1). CF(0) has three main subunits: a(1), b(2) and c(9-12). The alpha and beta chains form an alternating ring which encloses part of the gamma chain. CF(1) is attached to CF(0) by a central stalk formed by the gamma and epsilon chains, while a peripheral stalk is formed by the delta and b chains.

The protein localises to the cell inner membrane. It catalyses the reaction ATP + H2O + 4 H(+)(in) = ADP + phosphate + 5 H(+)(out). Functionally, produces ATP from ADP in the presence of a proton gradient across the membrane. The catalytic sites are hosted primarily by the beta subunits. This chain is ATP synthase subunit beta, found in Desulfotalea psychrophila (strain LSv54 / DSM 12343).